An 893-amino-acid polypeptide reads, in one-letter code: Translation initiation factor IF-2 (893 aa).

2 disordered regions span residues 135–169 and 201–300; these read KAKAKADAEAKAKAKVLTEKPVQESAEDKAAKAEE and ENEK…ESMD. Basic and acidic residues predominate over residues 201–224; the sequence is ENEKRWAEEEKARKEAEKTVDHHV. The segment covering 251 to 265 has biased composition (low complexity); the sequence is PSANAGNNANANAGA. The 170-residue stretch at 393–562 folds into the tr-type G domain; sequence SRAPVVTIMG…LLEAEVLELK (170 aa). A G1 region spans residues 402 to 409; sequence GHVDHGKT. Position 402–409 (402–409) interacts with GTP; sequence GHVDHGKT. The interval 427–431 is G2; sequence GITQH. Positions 448–451 are G3; that stretch reads DTPG. GTP is bound by residues 448–452 and 502–505; these read DTPGH and NKMD. Positions 502 to 505 are G4; that stretch reads NKMD. The G5 stretch occupies residues 538–540; that stretch reads SAK.

This sequence belongs to the TRAFAC class translation factor GTPase superfamily. Classic translation factor GTPase family. IF-2 subfamily.

It is found in the cytoplasm. Its function is as follows. One of the essential components for the initiation of protein synthesis. Protects formylmethionyl-tRNA from spontaneous hydrolysis and promotes its binding to the 30S ribosomal subunits. Also involved in the hydrolysis of GTP during the formation of the 70S ribosomal complex. This is Translation initiation factor IF-2 from Shewanella halifaxensis (strain HAW-EB4).